The chain runs to 452 residues: MLDITTLRKDLDSVIARLETRKSPQAFLNVDTFRTLEAERKTIQMRTEELQGKRNTLSKQIGQLKAKGAAGQAESDAVMAEVAGLKAELETSATRLEQIQLELQALLLGVPNLPHESVPVGADEHGNVVVRSWSPDGKGPKAFDFEVKDHVDIGTPLGLDFELGVKLTGARFTVMKGLIARLHRALAQFMLDVQTQEHGYTECYTPYIVNAQSMRGTGQLPKFEADLFAAKKGGQEAEAAPDNSALYLIPTSEVPLTNFVRDVVLAEAELPVKLTAHTPCFRSEAGSAGRDTRGLIRQHQFDKVEMVQIVHPDKSYETLEQMTGHAEAILQKLGLPYRVMSLCTGDMGFGASKTYDLEVWLPAQNTYREISSVSNCEAFQARRLQARFKNAQGKNELVHTLNGSGLAVGRALVAVLENYQNADGSVTVPQALRPYVGGQKVLGATAMNDMDM.

251-253 (TSE) serves as a coordination point for L-serine. Residue 282-284 (RSE) participates in ATP binding. An L-serine-binding site is contributed by glutamate 305. 369 to 372 (EISS) is an ATP binding site. Serine 404 is a binding site for L-serine.

The protein belongs to the class-II aminoacyl-tRNA synthetase family. Type-1 seryl-tRNA synthetase subfamily. In terms of assembly, homodimer. The tRNA molecule binds across the dimer.

It is found in the cytoplasm. The enzyme catalyses tRNA(Ser) + L-serine + ATP = L-seryl-tRNA(Ser) + AMP + diphosphate + H(+). It catalyses the reaction tRNA(Sec) + L-serine + ATP = L-seryl-tRNA(Sec) + AMP + diphosphate + H(+). It functions in the pathway aminoacyl-tRNA biosynthesis; selenocysteinyl-tRNA(Sec) biosynthesis; L-seryl-tRNA(Sec) from L-serine and tRNA(Sec): step 1/1. Functionally, catalyzes the attachment of serine to tRNA(Ser). Is also able to aminoacylate tRNA(Sec) with serine, to form the misacylated tRNA L-seryl-tRNA(Sec), which will be further converted into selenocysteinyl-tRNA(Sec). This Albidiferax ferrireducens (strain ATCC BAA-621 / DSM 15236 / T118) (Rhodoferax ferrireducens) protein is Serine--tRNA ligase.